The sequence spans 55 residues: Large ribosomal subunit protein bL33A (55 aa).

It belongs to the bacterial ribosomal protein bL33 family.

The sequence is that of Large ribosomal subunit protein bL33A from Mycobacterium ulcerans (strain Agy99).